The sequence spans 113 residues: uncharacterized protein (113 aa).

This is an uncharacterized protein from Bacillus subtilis (strain 168).